Here is a 197-residue protein sequence, read N- to C-terminus: UPF0215 protein MK0057 (197 aa).

Belongs to the UPF0215 family.

This is UPF0215 protein MK0057 from Methanopyrus kandleri (strain AV19 / DSM 6324 / JCM 9639 / NBRC 100938).